Reading from the N-terminus, the 206-residue chain is Peptidyl-tRNA hydrolase (206 aa).

Position 14 (tyrosine 14) interacts with tRNA. The active-site Proton acceptor is histidine 19. Positions 64 and 66 each coordinate tRNA. The interval phenylalanine 182–lysine 206 is disordered.

This sequence belongs to the PTH family. In terms of assembly, monomer.

It localises to the cytoplasm. It catalyses the reaction an N-acyl-L-alpha-aminoacyl-tRNA + H2O = an N-acyl-L-amino acid + a tRNA + H(+). Functionally, hydrolyzes ribosome-free peptidyl-tRNAs (with 1 or more amino acids incorporated), which drop off the ribosome during protein synthesis, or as a result of ribosome stalling. In terms of biological role, catalyzes the release of premature peptidyl moieties from peptidyl-tRNA molecules trapped in stalled 50S ribosomal subunits, and thus maintains levels of free tRNAs and 50S ribosomes. This is Peptidyl-tRNA hydrolase from Desulforamulus reducens (strain ATCC BAA-1160 / DSM 100696 / MI-1) (Desulfotomaculum reducens).